Here is a 164-residue protein sequence, read N- to C-terminus: Decoration protein (164 aa).

The segment at 1 to 72 (MIDYSGLRTI…AIPPAPPAPP (72 aa)) is binding to the capsid hexamer. In terms of domain architecture, Ig-like spans 71–164 (PPLTLSKDLT…VTVNPTVPGG (94 aa)).

As to quaternary structure, interacts with the major capsid protein; each hexon binds a single copy of the decoration protein.

The protein localises to the virion. In terms of biological role, decoration protein that binds asymmetrically to the center of each capsid protein hexamer after capsid expansion. Stabilizes the capsid and protects from DNA release. This is Decoration protein from Escherichia phage T5 (Enterobacteria phage T5).